Reading from the N-terminus, the 29-residue chain is Cytochrome b6-f complex subunit 8 (29 aa).

A helical membrane pass occupies residues 3–23 (IVSLAWAALMVVFTFSLSLVV).

It belongs to the PetN family. As to quaternary structure, the 4 large subunits of the cytochrome b6-f complex are cytochrome b6, subunit IV (17 kDa polypeptide, PetD), cytochrome f and the Rieske protein, while the 4 small subunits are PetG, PetL, PetM and PetN. The complex functions as a dimer.

It is found in the plastid. The protein localises to the chloroplast thylakoid membrane. Functionally, component of the cytochrome b6-f complex, which mediates electron transfer between photosystem II (PSII) and photosystem I (PSI), cyclic electron flow around PSI, and state transitions. This is Cytochrome b6-f complex subunit 8 from Solanum bulbocastanum (Wild potato).